Consider the following 461-residue polypeptide: Photosystem II CP43 reaction center protein (461 aa).

A propeptide spanning residues 1 to 2 (ME) is cleaved from the precursor. Thr3 is subject to N-acetylthreonine. Thr3 is modified (phosphothreonine). Helical transmembrane passes span 57-81 (LFEV…PHLA), 122-143 (LLGP…KDRN), 166-188 (KALY…RKIT), 243-263 (KPFA…LSYS), and 279-300 (WFNN…ASQA). Glu355 is a binding site for [CaMn4O5] cluster. A helical membrane pass occupies residues 435–459 (RARAAAAGFEKGIDRDFEPVLSMTP).

This sequence belongs to the PsbB/PsbC family. PsbC subfamily. In terms of assembly, PSII is composed of 1 copy each of membrane proteins PsbA, PsbB, PsbC, PsbD, PsbE, PsbF, PsbH, PsbI, PsbJ, PsbK, PsbL, PsbM, PsbT, PsbX, PsbY, PsbZ, Psb30/Ycf12, at least 3 peripheral proteins of the oxygen-evolving complex and a large number of cofactors. It forms dimeric complexes. Binds multiple chlorophylls and provides some of the ligands for the Ca-4Mn-5O cluster of the oxygen-evolving complex. It may also provide a ligand for a Cl- that is required for oxygen evolution. PSII binds additional chlorophylls, carotenoids and specific lipids. is required as a cofactor.

It is found in the plastid. The protein resides in the chloroplast thylakoid membrane. One of the components of the core complex of photosystem II (PSII). It binds chlorophyll and helps catalyze the primary light-induced photochemical processes of PSII. PSII is a light-driven water:plastoquinone oxidoreductase, using light energy to abstract electrons from H(2)O, generating O(2) and a proton gradient subsequently used for ATP formation. This is Photosystem II CP43 reaction center protein from Nicotiana sylvestris (Wood tobacco).